The following is a 228-amino-acid chain: HTH-type transcriptional regulator ArcR (228 aa).

22 to 141 lines the a nucleoside 3',5'-cyclic phosphate pocket; the sequence is SYINIPVGVL…VKLFSLLSET (120 aa). In terms of domain architecture, HTH crp-type spans 155-228; that stretch reads KLAKERVTKI…SKNWLVSKDL (74 aa). Positions 188–207 form a DNA-binding region, H-T-H motif; it reads IQLLSDMAGISRETTSHIIN.

It localises to the cytoplasm. Functionally, positively regulates the expression of the arcABDCR operon under anaerobic conditions, thus playing an essential role in arginine catabolism. May also control the expression of genes encoding proteins which are involved in anaerobic metabolism. Can bind cyclic AMP. This is HTH-type transcriptional regulator ArcR (arcR) from Staphylococcus epidermidis (strain ATCC 35984 / DSM 28319 / BCRC 17069 / CCUG 31568 / BM 3577 / RP62A).